The sequence spans 330 residues: Phenylalanine--tRNA ligase alpha subunit (330 aa).

Glu246 lines the Mg(2+) pocket.

The protein belongs to the class-II aminoacyl-tRNA synthetase family. Phe-tRNA synthetase alpha subunit type 1 subfamily. Tetramer of two alpha and two beta subunits. Requires Mg(2+) as cofactor.

It localises to the cytoplasm. It catalyses the reaction tRNA(Phe) + L-phenylalanine + ATP = L-phenylalanyl-tRNA(Phe) + AMP + diphosphate + H(+). The protein is Phenylalanine--tRNA ligase alpha subunit of Sulfurimonas denitrificans (strain ATCC 33889 / DSM 1251) (Thiomicrospira denitrificans (strain ATCC 33889 / DSM 1251)).